Here is a 432-residue protein sequence, read N- to C-terminus: Pachytene checkpoint protein 2 homolog (432 aa).

The residue at position 1 (methionine 1) is an N-acetylmethionine. 179–186 (GPPGTGKT) contributes to the ATP binding site.

It belongs to the AAA ATPase family. PCH2 subfamily. As to quaternary structure, specifically interacts with the ligand binding domain of the thyroid receptor (TR). This interaction does not require the presence of thyroid hormone for its interaction. Interacts with proteasome subunit PSMA8; to participate in meiosis progression during spermatogenesis. In terms of tissue distribution, widely expressed, including in testis.

Its function is as follows. Plays a key role in chromosome recombination and chromosome structure development during meiosis. Required at early steps in meiotic recombination that leads to non-crossovers pathways. Also needed for efficient completion of homologous synapsis by influencing crossover distribution along the chromosomes affecting both crossovers and non-crossovers pathways. Also required for development of higher-order chromosome structures and is needed for synaptonemal-complex formation. In males, required for efficient synapsis of the sex chromosomes and for sex body formation. Promotes early steps of the DNA double-strand breaks (DSBs) repair process upstream of the assembly of RAD51 complexes. Required for depletion of HORMAD1 and HORMAD2 from synapsed chromosomes. Plays a role in mitotic spindle assembly checkpoint (SAC) activation. This chain is Pachytene checkpoint protein 2 homolog (Trip13), found in Mus musculus (Mouse).